Reading from the N-terminus, the 203-residue chain is N-(5'-phosphoribosyl)anthranilate isomerase (203 aa).

Belongs to the TrpF family.

The catalysed reaction is N-(5-phospho-beta-D-ribosyl)anthranilate = 1-(2-carboxyphenylamino)-1-deoxy-D-ribulose 5-phosphate. It functions in the pathway amino-acid biosynthesis; L-tryptophan biosynthesis; L-tryptophan from chorismate: step 3/5. This Geobacter sulfurreducens (strain ATCC 51573 / DSM 12127 / PCA) protein is N-(5'-phosphoribosyl)anthranilate isomerase.